A 247-amino-acid chain; its full sequence is Ribonuclease 3 (247 aa).

Residues 21–149 (LQKLSKKIGI…LVGAIYLDQG (129 aa)) form the RNase III domain. E62 serves as a coordination point for Mg(2+). D66 is an active-site residue. Mg(2+) is bound by residues N135 and E138. E138 is a catalytic residue. Positions 176–245 (DYKTQLQEYS…AKELYNRIRK (70 aa)) constitute a DRBM domain.

The protein belongs to the ribonuclease III family. As to quaternary structure, homodimer. It depends on Mg(2+) as a cofactor.

The protein localises to the cytoplasm. It carries out the reaction Endonucleolytic cleavage to 5'-phosphomonoester.. Digests double-stranded RNA. Involved in the processing of primary rRNA transcript to yield the immediate precursors to the large and small rRNAs (23S and 16S). Processes some mRNAs, and tRNAs when they are encoded in the rRNA operon. Processes pre-crRNA and tracrRNA of type II CRISPR loci if present in the organism. The sequence is that of Ribonuclease 3 from Leptospira interrogans serogroup Icterohaemorrhagiae serovar copenhageni (strain Fiocruz L1-130).